The chain runs to 422 residues: Monoacylglycerol lipase ABHD2 (422 aa).

Topologically, residues 1–15 are cytoplasmic; that stretch reads MSAQLEADVRTMSPE. The helical; Signal-anchor for type II membrane protein transmembrane segment at 16–36 threads the bilayer; that stretch reads MPAMFDGMKLAAVAAVLYVIV. Residues 37 to 422 are Extracellular-facing; that stretch reads RSLNLKCPTA…HKPQCHQQKE (386 aa). One can recognise an AB hydrolase-1 domain in the interval 134 to 385; sequence MVICPGIGNH…HGGHLGFFEG (252 aa). N142 is a glycosylation site (N-linked (GlcNAc...) asparagine). The Nucleophile role is filled by S213. 3 N-linked (GlcNAc...) asparagine glycosylation sites follow: N285, N335, and N344. Residues D348 and H379 each act as charge relay system in the active site.

Belongs to the AB hydrolase superfamily. AB hydrolase 4 family.

Its subcellular location is the cell membrane. It carries out the reaction Hydrolyzes glycerol monoesters of long-chain fatty acids.. The enzyme catalyses an acetyl ester + H2O = an aliphatic alcohol + acetate + H(+). The catalysed reaction is a triacylglycerol + H2O = a diacylglycerol + a fatty acid + H(+). It catalyses the reaction 2-(5Z,8Z,11Z,14Z-eicosatetraenoyl)-glycerol + H2O = glycerol + (5Z,8Z,11Z,14Z)-eicosatetraenoate + H(+). It carries out the reaction a butanoate ester + H2O = an aliphatic alcohol + butanoate + H(+). The enzyme catalyses hexadecanoate ester + H2O = an aliphatic alcohol + hexadecanoate + H(+). Its activity is regulated as follows. Acylglycerol lipase activity is activated upon binding to progesterone. Functionally, progesterone-dependent acylglycerol lipase that catalyzes hydrolysis of endocannabinoid arachidonoylglycerol (AG) from cell membrane. Acts as a progesterone receptor: progesterone-binding activates the acylglycerol lipase activity, mediating degradation of 1-arachidonoylglycerol (1AG) and 2-arachidonoylglycerol (2AG) to glycerol and arachidonic acid (AA). Also displays an ester hydrolase activity against acetyl ester, butanoate ester and hexadecanoate ester. Plays a key role in sperm capacitation in response to progesterone by mediating degradation of 2AG, an inhibitor of the sperm calcium channel CatSper, leading to calcium influx via CatSper and sperm activation. May also play a role in smooth muscle cells migration. This chain is Monoacylglycerol lipase ABHD2 (abhd2b), found in Danio rerio (Zebrafish).